The sequence spans 53 residues: MGMSFSHLLIVLLIIFVLFGAGKLPQVMSDLAKGLKAFKDGLKDDGSDNDKNK.

Residues 1–21 form a helical membrane-spanning segment; that stretch reads MGMSFSHLLIVLLIIFVLFGA.

It belongs to the TatA/E family. In terms of assembly, the Tat system comprises two distinct complexes: a TatABC complex, containing multiple copies of TatA, TatB and TatC subunits, and a separate TatA complex, containing only TatA subunits. Substrates initially bind to the TatABC complex, which probably triggers association of the separate TatA complex to form the active translocon.

The protein resides in the cell inner membrane. Part of the twin-arginine translocation (Tat) system that transports large folded proteins containing a characteristic twin-arginine motif in their signal peptide across membranes. TatA could form the protein-conducting channel of the Tat system. In Rickettsia africae (strain ESF-5), this protein is Sec-independent protein translocase protein TatA.